Reading from the N-terminus, the 508-residue chain is Photosystem II CP47 reaction center protein (508 aa).

Transmembrane regions (helical) follow at residues 21-36 (AVHI…WAGS), 101-115 (IVFS…IWHW), 140-156 (GIHL…FGAF), 203-218 (IAAG…FHLS), 237-252 (VLSS…AFVV), and 457-472 (TFAL…HGAR).

Belongs to the PsbB/PsbC family. PsbB subfamily. In terms of assembly, PSII is composed of 1 copy each of membrane proteins PsbA, PsbB, PsbC, PsbD, PsbE, PsbF, PsbH, PsbI, PsbJ, PsbK, PsbL, PsbM, PsbT, PsbX, PsbY, PsbZ, Psb30/Ycf12, at least 3 peripheral proteins of the oxygen-evolving complex and a large number of cofactors. It forms dimeric complexes. Binds multiple chlorophylls. PSII binds additional chlorophylls, carotenoids and specific lipids. serves as cofactor.

The protein localises to the plastid. It is found in the chloroplast thylakoid membrane. In terms of biological role, one of the components of the core complex of photosystem II (PSII). It binds chlorophyll and helps catalyze the primary light-induced photochemical processes of PSII. PSII is a light-driven water:plastoquinone oxidoreductase, using light energy to abstract electrons from H(2)O, generating O(2) and a proton gradient subsequently used for ATP formation. The sequence is that of Photosystem II CP47 reaction center protein from Triticum aestivum (Wheat).